The chain runs to 171 residues: Probable deoxyuridine 5'-triphosphate nucleotidohydrolase (171 aa).

It belongs to the dCTP deaminase family. Archaeal dUTPase subfamily.

The catalysed reaction is dUTP + H2O = dUMP + diphosphate + H(+). The protein operates within pyrimidine metabolism; dUMP biosynthesis; dUMP from dCTP (dUTP route): step 2/2. In terms of biological role, this enzyme is involved in nucleotide metabolism: it produces dUMP, the immediate precursor of thymidine nucleotides and it decreases the intracellular concentration of dUTP so that uracil cannot be incorporated into DNA. In Methanosarcina mazei (strain ATCC BAA-159 / DSM 3647 / Goe1 / Go1 / JCM 11833 / OCM 88) (Methanosarcina frisia), this protein is Probable deoxyuridine 5'-triphosphate nucleotidohydrolase.